A 287-amino-acid chain; its full sequence is Aquaporin PIP1-2 (287 aa).

Positions Met-1 to Pro-37 are disordered. The Cytoplasmic segment spans residues Met-1–Gly-55. Residues Ile-56 to Val-76 form a helical membrane-spanning segment. Over Val-77 to Gln-89 the chain is Extracellular. A helical transmembrane segment spans residues Gly-90 to Ser-110. Over Gly-111–Ala-133 the chain is Cytoplasmic. An NPA 1 motif is present at residues Asn-115–Ala-117. A helical transmembrane segment spans residues Leu-134–Phe-154. Topologically, residues Gln-155–Lys-175 are extracellular. Residues Gly-176–Ala-196 traverse the membrane as a helical segment. The Cytoplasmic portion of the chain corresponds to Thr-197 to Pro-209. Residues Ile-210–Ile-230 form a helical membrane-spanning segment. The Extracellular segment spans residues Thr-231–Trp-257. The NPA 2 signature appears at Asn-236–Ala-238. Residues Ile-258–Ile-278 form a helical membrane-spanning segment. Residues Arg-279–Ser-287 lie on the Cytoplasmic side of the membrane.

The protein belongs to the MIP/aquaporin (TC 1.A.8) family. PIP (TC 1.A.8.11) subfamily. As to expression, barely detectable in roots, leaves and fruits.

The protein localises to the cell membrane. Water channel required to facilitate the transport of water across cell membrane; mercury-insensitive. Contributes to the tolerance to multiple abiotic stresses including salt (NaCl), cold and water deprivation, by modulating cytosolic K(+)/Na(+) ratio, maintaining osmotic balance, and reducing membrane injury (e.g. oxidative injury). In Musa acuminata subsp. malaccensis (Wild banana), this protein is Aquaporin PIP1-2.